The sequence spans 135 residues: Snaclec rhodocetin subunit gamma (135 aa).

3 cysteine pairs are disulfide-bonded: Cys4–Cys15, Cys32–Cys129, and Cys104–Cys121. Positions 11–130 (YDQHCYQAFN…CQAKNPFVCK (120 aa)) constitute a C-type lectin domain.

Belongs to the snaclec family. As to quaternary structure, heterotetramer of subunit alpha, beta, gamma and delta; only the gamma and the delta subunits are disulfide-linked. Alpha-beta heterodimer and gamma-delta heterodimer associate orthogonally, giving a cruciform conformation. This heterotetramer may covalently dimerizes thanks to the gamma subunit. Expressed by the venom gland.

Its subcellular location is the secreted. Functionally, potent inhibitor of collagen-induced platelet aggregation. It acts by binding to the integrin alpha2A domain and blocks collagen binding to integrin alpha-2/beta-1 (ITGA2/ITGB1). The gamma/delta subunits mainly contribute to this activity. This Calloselasma rhodostoma (Malayan pit viper) protein is Snaclec rhodocetin subunit gamma.